The sequence spans 192 residues: Ion-translocating oxidoreductase complex subunit A (192 aa).

The next 6 helical transmembrane spans lie at 5–25 (LLLL…FLGL), 39–59 (IGMS…SYLV), 65–85 (LPFD…AVVV), 102–122 (ALGI…VALL), 134–154 (AIYG…FSAM), and 171–191 (AIAM…TGLV).

Belongs to the NqrDE/RnfAE family. In terms of assembly, the complex is composed of six subunits: RnfA, RnfB, RnfC, RnfD, RnfE and RnfG.

The protein resides in the cell inner membrane. Functionally, part of a membrane-bound complex that couples electron transfer with translocation of ions across the membrane. In Shewanella putrefaciens (strain CN-32 / ATCC BAA-453), this protein is Ion-translocating oxidoreductase complex subunit A.